We begin with the raw amino-acid sequence, 237 residues long: Photosystem I-associated linker protein CpcL (237 aa).

One can recognise a PBS-linker domain in the interval 11–191 (TTQNQRVQSF…DYRDRAGIVR (181 aa)). Residues 208–228 (GVAILGVLLAISAGMTFLFVL) traverse the membrane as a helical segment.

It belongs to the phycobilisome linker protein family. In terms of assembly, part of a specialized phycobilisome (PBS), a structure that is usually composed of two distinct substructures: a core complex and a number of rods radiating from the core. This protein is part of a core-less PBS rod (called CpcL-PBS). In vegetative cells associated substoichiometrically with photosystem I and phycobiliproteins phycocyanin as well as phycoerythrocyanin in the thylakoid membrane, not found in conventional, hemidiscoidal phycobilisomes.

It localises to the cellular thylakoid membrane. In terms of biological role, rod linker protein, associated with phycocyanin (PC). Linker polypeptides determine the state of aggregation and the location of the disk-shaped phycobiliprotein units within the phycobilisome (PBS) and modulate their spectroscopic properties in order to mediate a directed and optimal energy transfer. Forms a supercomplex with tetrameric photosystem I (PSI) and PC that allows efficient energy transfer from PC to PSI. This protein seems to be in the middle of the PC hexameric rod and may anchor the PC rods at the periphery of PSI tetramers. May be involved in the cyclic electron transport around PSI that provides ATP needed for N(2) fixation in heterocysts. This chain is Photosystem I-associated linker protein CpcL, found in Nostoc sp. (strain PCC 7120 / SAG 25.82 / UTEX 2576).